We begin with the raw amino-acid sequence, 309 residues long: Protein FdhE (309 aa).

The protein belongs to the FdhE family.

The protein localises to the cytoplasm. Necessary for formate dehydrogenase activity. The sequence is that of Protein FdhE from Escherichia coli (strain K12 / MC4100 / BW2952).